We begin with the raw amino-acid sequence, 480 residues long: MSKGEIVQVIGPVVDVEFPLDKDLPDINNALRVTNNNGDTLVLEVTLELGDGVLRTISMESTDGLRRGMEVEDTGAPISVPVGKDTLGRVFNVLGDPIDGGPALGKDVKREGIHKEAPKYDELSTSEEILETGIKVIDLLEPYVRGGKVGLFGGAGVGKTTIIQELIHNIAQEHGGISVFTGVGERTREGNDLYFEMKASGVLSKTAMVFGQMNEPPGARMRVALTGLTIAEYFRDVEGLDVLLFIDNIFRFTQAGSEVSALLGRMPSAVGYQPTLATEMGQLQERITSTKKGSITSIQAVYVPADDYTDPAPATTFAHLDATTNLERRLVEQGIYPAVDPLESTSSALDPEIVGEEHYEVAVKVQHILQRYQELQDIISVLGMDELSDDEKLIVERARKIQFFLSQNFFVAEQFTGIPGSYVPIKETIKGFKMIIDGKLDDLPEDAFRNVGPIEDVIKQAEKMGVTPKNPEAKAILEAK.

153–160 (GGAGVGKT) contributes to the ATP binding site.

Belongs to the ATPase alpha/beta chains family. As to quaternary structure, F-type ATPases have 2 components, CF(1) - the catalytic core - and CF(0) - the membrane proton channel. CF(1) has five subunits: alpha(3), beta(3), gamma(1), delta(1), epsilon(1). CF(0) has three main subunits: a(1), b(2) and c(9-12). The alpha and beta chains form an alternating ring which encloses part of the gamma chain. CF(1) is attached to CF(0) by a central stalk formed by the gamma and epsilon chains, while a peripheral stalk is formed by the delta and b chains.

It localises to the cell membrane. The catalysed reaction is ATP + H2O + 4 H(+)(in) = ADP + phosphate + 5 H(+)(out). Its function is as follows. Produces ATP from ADP in the presence of a proton gradient across the membrane. The catalytic sites are hosted primarily by the beta subunits. In Lactobacillus johnsonii (strain CNCM I-12250 / La1 / NCC 533), this protein is ATP synthase subunit beta.